We begin with the raw amino-acid sequence, 834 residues long: Glycerol-3-phosphate acyltransferase (834 aa).

The short motif at 309 to 314 (CHRSHI) is the HXXXXD motif element.

This sequence belongs to the GPAT/DAPAT family.

The protein resides in the cell inner membrane. It catalyses the reaction sn-glycerol 3-phosphate + an acyl-CoA = a 1-acyl-sn-glycero-3-phosphate + CoA. It functions in the pathway phospholipid metabolism; CDP-diacylglycerol biosynthesis; CDP-diacylglycerol from sn-glycerol 3-phosphate: step 1/3. This is Glycerol-3-phosphate acyltransferase from Pseudomonas fluorescens (strain Pf0-1).